Consider the following 495-residue polypeptide: B3 domain-containing protein Os01g0234100 (495 aa).

2 disordered regions span residues 1–25 (MAID…KMEQ) and 88–108 (PGIP…NTTE). Residues 92-108 (QTCNTQNTSNGRTNTTE) are compositionally biased toward polar residues. Residues 152-243 (FVKHMLHSHV…KFKVHIIRDK (92 aa)) constitute a DNA-binding region (TF-B3). Over residues 268-282 (EATDNATKPKEDPET) the composition is skewed to basic and acidic residues. The tract at residues 268–289 (EATDNATKPKEDPETTRVSSKV) is disordered.

The protein resides in the nucleus. In Oryza sativa subsp. japonica (Rice), this protein is B3 domain-containing protein Os01g0234100.